Consider the following 1037-residue polypeptide: Multidrug resistance protein MdtF (1037 aa).

The Cytoplasmic segment spans residues 1–9; it reads MANYFIDRP. Residues 10 to 30 traverse the membrane as a helical segment; sequence VFAWVLAIIMMLAGGLAIMNL. Residues 31–338 lie on the Periplasmic side of the membrane; sequence PVAQYPQIAP…TTPFIKISIQ (308 aa). A helical transmembrane segment spans residues 339–359; sequence EVFKTLVEAIILVFLVMYLFL. Residues 360-369 are Cytoplasmic-facing; sequence QNFRATIIPT. A helical membrane pass occupies residues 370–390; it reads IAVPVVILGTFAILSAVGFTI. Over 391 to 392 the chain is Periplasmic; that stretch reads NT. Residues 393-413 traverse the membrane as a helical segment; it reads LTMFGMVLAIGLLVDDAIVVV. Residues 414–440 lie on the Cytoplasmic side of the membrane; sequence ENVERVIAEDKLPPKEATHKSMGQIQR. Residues 441 to 461 traverse the membrane as a helical segment; it reads ALVGIAVVLSAVFMPMAFMSG. At 462-471 the chain is on the periplasmic side; it reads ATGEIYRQFS. The helical transmembrane segment at 472 to 492 threads the bilayer; it reads ITLISSMLLSVFVAMSLTPAL. Residues 493-534 are Cytoplasmic-facing; it reads CATILKAAPEGGHKPNALFARFNTLFEKSTQHYTDSTRSLLR. The chain crosses the membrane as a helical span at residues 535-555; it reads CTGRYMVVYLLICAGMAVLFL. At 556–870 the chain is on the periplasmic side; sequence RTPTSFLPEE…SYQEALSSNQ (315 aa). A helical membrane pass occupies residues 871 to 891; the sequence is APALYAISLVVVFLALAALYE. Position 892 (serine 892) is a topological domain, cytoplasmic. A helical transmembrane segment spans residues 893 to 913; the sequence is WSIPFSVMLVVPLGVVGALLA. At 914–927 the chain is on the periplasmic side; the sequence is TDLRGLSNDVYFQV. Residues 928-948 traverse the membrane as a helical segment; that stretch reads GLLTTIGLSAKNAILIVEFAV. At 949 to 972 the chain is on the cytoplasmic side; the sequence is EMMQKEGKTPVEAIIEAARMRLRP. Residues 973–993 form a helical membrane-spanning segment; that stretch reads ILMTSLAFILGVLPLVISHGA. Topologically, residues 994-1006 are periplasmic; it reads GSGAQNAVGTGVM. The helical transmembrane segment at 1007–1027 threads the bilayer; the sequence is GGMFAATVLAIYFVPVFFVVV. Residues 1028–1037 are Cytoplasmic-facing; that stretch reads EHLFARFKKA.

This sequence belongs to the resistance-nodulation-cell division (RND) (TC 2.A.6) family. As to quaternary structure, homotrimer. Part of the tripartite efflux system MdtEF-TolC, which is composed of an inner membrane transporter, MdtF, a membrane fusion protein, MdtE, and an outer membrane component, TolC. The complex forms a large protein conduit and can translocate molecules across both the inner and outer membranes.

It localises to the cell inner membrane. Its function is as follows. Part of the tripartite efflux system MdtEF-TolC, which confers resistance to various compounds. The protein is Multidrug resistance protein MdtF (mdtF) of Escherichia coli O6:H1 (strain CFT073 / ATCC 700928 / UPEC).